We begin with the raw amino-acid sequence, 102 residues long: Parathymosin (102 aa).

The segment at 1–102 is disordered; it reads MSEKSVEAAA…RQKTENGASA (102 aa). Ser2 carries the post-translational modification N-acetylserine. Ser2 is subject to Phosphoserine. An N6-acetyllysine modification is found at Lys4. Phosphoserine is present on residues Ser5 and Ser13. Basic and acidic residues predominate over residues 13 to 37; it reads SAKDLKEKKEKVEEKASRKERKKEV. An N6-acetyllysine modification is found at Lys15. Residues 38 to 76 show a composition bias toward acidic residues; the sequence is VEEEENGAEEEEEETAEDGEEEDEGEEEDEEEEEEDDEG. Thr52 carries the post-translational modification Phosphothreonine. Position 92 is an N6-acetyllysine (Lys92).

This sequence belongs to the pro/parathymosin family.

Parathymosin may mediate immune function by blocking the effect of prothymosin alpha which confers resistance to certain opportunistic infections. This is Parathymosin (PTMS) from Homo sapiens (Human).